A 229-amino-acid chain; its full sequence is 7-cyano-7-deazaguanine synthase (229 aa).

8 to 18 (FSGGQDSTTCL) lines the ATP pocket. 4 residues coordinate Zn(2+): Cys187, Cys196, Cys199, and Cys202.

The protein belongs to the QueC family. Zn(2+) serves as cofactor.

It catalyses the reaction 7-carboxy-7-deazaguanine + NH4(+) + ATP = 7-cyano-7-deazaguanine + ADP + phosphate + H2O + H(+). It functions in the pathway purine metabolism; 7-cyano-7-deazaguanine biosynthesis. Functionally, catalyzes the ATP-dependent conversion of 7-carboxy-7-deazaguanine (CDG) to 7-cyano-7-deazaguanine (preQ(0)). This is 7-cyano-7-deazaguanine synthase from Shewanella halifaxensis (strain HAW-EB4).